The following is a 158-amino-acid chain: NADH-quinone oxidoreductase subunit B (158 aa).

Residues C37, C38, C102, and C132 each coordinate [4Fe-4S] cluster.

This sequence belongs to the complex I 20 kDa subunit family. As to quaternary structure, NDH-1 is composed of 14 different subunits. Subunits NuoB, C, D, E, F, and G constitute the peripheral sector of the complex. The cofactor is [4Fe-4S] cluster.

The protein localises to the cell inner membrane. The enzyme catalyses a quinone + NADH + 5 H(+)(in) = a quinol + NAD(+) + 4 H(+)(out). In terms of biological role, NDH-1 shuttles electrons from NADH, via FMN and iron-sulfur (Fe-S) centers, to quinones in the respiratory chain. Couples the redox reaction to proton translocation (for every two electrons transferred, four hydrogen ions are translocated across the cytoplasmic membrane), and thus conserves the redox energy in a proton gradient. This chain is NADH-quinone oxidoreductase subunit B, found in Aromatoleum aromaticum (strain DSM 19018 / LMG 30748 / EbN1) (Azoarcus sp. (strain EbN1)).